The sequence spans 199 residues: dITP/XTP pyrophosphatase (199 aa).

8–13 contacts substrate; the sequence is THNRNK. Asp-68 (proton acceptor) is an active-site residue. Asp-68 is a Mg(2+) binding site. Substrate is bound by residues Ser-69, 151–154, Lys-174, and 179–180; these read HGYD and HR.

Belongs to the HAM1 NTPase family. As to quaternary structure, homodimer. Mg(2+) is required as a cofactor.

It catalyses the reaction XTP + H2O = XMP + diphosphate + H(+). The enzyme catalyses dITP + H2O = dIMP + diphosphate + H(+). It carries out the reaction ITP + H2O = IMP + diphosphate + H(+). Pyrophosphatase that catalyzes the hydrolysis of nucleoside triphosphates to their monophosphate derivatives, with a high preference for the non-canonical purine nucleotides XTP (xanthosine triphosphate), dITP (deoxyinosine triphosphate) and ITP. Seems to function as a house-cleaning enzyme that removes non-canonical purine nucleotides from the nucleotide pool, thus preventing their incorporation into DNA/RNA and avoiding chromosomal lesions. This chain is dITP/XTP pyrophosphatase, found in Leifsonia xyli subsp. xyli (strain CTCB07).